Reading from the N-terminus, the 546-residue chain is Probable Xaa-Pro aminopeptidase pepP (546 aa).

Positions 341, 352, 475, and 515 each coordinate Mn(2+).

Belongs to the peptidase M24B family. It depends on Mn(2+) as a cofactor.

The enzyme catalyses Release of any N-terminal amino acid, including proline, that is linked to proline, even from a dipeptide or tripeptide.. Its function is as follows. Catalyzes the removal of a penultimate prolyl residue from the N-termini of peptides. The chain is Probable Xaa-Pro aminopeptidase pepP (pepP) from Sclerotinia sclerotiorum (strain ATCC 18683 / 1980 / Ss-1) (White mold).